Consider the following 874-residue polypeptide: UPF0182 protein Sfum_2137 (874 aa).

7 helical membrane-spanning segments follow: residues 7-27, 57-77, 110-130, 171-191, 208-228, 252-272, and 283-303; these read WPLI…LSSL, IVFG…FWVA, SLWV…LPIF, RRLL…YLLE, LHLS…YVLQ, VIWA…FSMI, and PLVV…SAFL.

Belongs to the UPF0182 family.

Its subcellular location is the cell membrane. This Syntrophobacter fumaroxidans (strain DSM 10017 / MPOB) protein is UPF0182 protein Sfum_2137.